We begin with the raw amino-acid sequence, 446 residues long: Glutamine synthetase (446 aa).

Positions 14 to 106 constitute a GS beta-grasp domain; it reads NNVKFIRFQF…VICDVYTTNG (93 aa). Residues 113-446 form the GS catalytic domain; that stretch reads PRGCLKRVLA…DWETKQYLKI (334 aa). The Mg(2+) site is built by Glu137 and Glu139. Glu187 lines the ATP pocket. Mg(2+) is bound by residues Glu192 and Glu199. Residues 243–244 and Gly244 contribute to the L-glutamate site; that span reads NG. A Mg(2+)-binding site is contributed by His248. Residues 250-252 and Ser252 each bind ATP; that span reads HQS. Residues Arg301, Glu307, and Arg319 each coordinate L-glutamate. ATP contacts are provided by Arg319, Arg324, and Lys331. Residue Glu336 coordinates Mg(2+). Arg338 is an L-glutamate binding site.

The protein belongs to the glutamine synthetase family. In terms of assembly, oligomer of 12 subunits arranged in the form of two hexagons. The cofactor is Mg(2+).

The protein resides in the cytoplasm. The catalysed reaction is L-glutamate + NH4(+) + ATP = L-glutamine + ADP + phosphate + H(+). Functionally, probably involved in nitrogen metabolism via ammonium assimilation. Catalyzes the ATP-dependent biosynthesis of glutamine from glutamate and ammonia. This is Glutamine synthetase from Methanococcus maripaludis (strain DSM 14266 / JCM 13030 / NBRC 101832 / S2 / LL).